A 593-amino-acid polypeptide reads, in one-letter code: ATP-dependent lipid A-core flippase (593 aa).

6 helical membrane passes run 33–55, 67–87, 146–166, 169–189, 258–278, and 284–304; these read YIFLSADASMIYLINPILNYGFG, ILMLMGVGMVGFIALRSVGSF, AIITVVQDGTFVIGLIVVMFV, WQLSLFLIVVGPFLGLFISII, VIQIIASLVLAFSLFTIAIFG, and GSSWLTAGSFASFFAAAAAIL. The 282-residue stretch at 38-319 folds into the ABC transmembrane type-1 domain; sequence ADASMIYLIN…LTKVNVVIQK (282 aa). Residues 351-585 enclose the ABC transporter domain; it reads VTIKDLSFAF…GGLYTGSINR (235 aa). Residue 383–390 participates in ATP binding; sequence GKSGSGKT.

Belongs to the ABC transporter superfamily. Lipid exporter (TC 3.A.1.106) family. In terms of assembly, homodimer.

It localises to the cell membrane. It carries out the reaction ATP + H2O + lipid A-core oligosaccharideSide 1 = ADP + phosphate + lipid A-core oligosaccharideSide 2.. Functionally, involved in lipopolysaccharide (LPS) biosynthesis. Translocates lipid A-core from the inner to the outer leaflet of the inner membrane. Transmembrane domains (TMD) form a pore in the inner membrane and the ATP-binding domain (NBD) is responsible for energy generation. The protein is ATP-dependent lipid A-core flippase of Francisella novicida.